The primary structure comprises 329 residues: MSMKQPVRVAVTGAAGNISYAMLFRIASGEMLGKDQPVILQLLEIAPALDALKGVVMELEDCAFPLLAGIVQTDDATVAFKDVDYALLVGSRPRGPGMERKDLLEANAAIFSAQGKALNDVASRDVKVLVVGNPANTNALIAQRNAPDLDPRNFTAMTRLDHNRAMAQLAGKTDSTVNDVKKMIIWGNHSSTQYPDLTASTVNGKLALDLVDRTWYEGTYIPEVQQRGAAIIKARGASSAASAANAAIAHMRTWVLGTDENDWVSMGVYSNGEYGIAKGLIYSFPCTCTNGDWSIVDGVDVSSAFSKEKMAATEQELSEERDAVAHLLP.

13–19 (GAAGNIS) provides a ligand contact to NAD(+). Residues Arg-94 and Arg-100 each contribute to the substrate site. Residues Asn-107, Gln-114, and 131–133 (VGN) contribute to the NAD(+) site. Positions 133 and 164 each coordinate substrate. His-189 (proton acceptor) is an active-site residue.

The protein belongs to the LDH/MDH superfamily. MDH type 2 family.

The catalysed reaction is (S)-malate + NAD(+) = oxaloacetate + NADH + H(+). In terms of biological role, catalyzes the reversible oxidation of malate to oxaloacetate. This chain is Malate dehydrogenase, found in Psychrobacter arcticus (strain DSM 17307 / VKM B-2377 / 273-4).